The sequence spans 968 residues: Catenin delta-1 (968 aa).

Met-1 carries the N-acetylmethionine modification. A necessary and sufficient for interaction with CCDC85B region spans residues 1 to 357 (MDDSEVESTA…ASLDSLRKGG (357 aa)). A Phosphoserine modification is found at Ser-4. Residues 10–46 (ASILASVKEQEAQFEKLTRALEEERRHVSAQLERVRV) adopt a coiled-coil conformation. Ser-47 bears the Phosphoserine mark. Residue Thr-59 is modified to Phosphothreonine. Tyr-112 is subject to Phosphotyrosine; by FYN. At Ser-125 the chain carries Phosphoserine. Residues Tyr-217 and Tyr-221 each carry the phosphotyrosine modification. At Ser-225 the chain carries Phosphoserine. At Tyr-228 the chain carries Phosphotyrosine. A phosphoserine mark is found at Ser-230 and Ser-252. Residue Tyr-257 is modified to Phosphotyrosine. Ser-268 and Ser-269 each carry phosphoserine. Tyr-280 bears the Phosphotyrosine mark. Phosphoserine; by PAK5 is present on Ser-288. Tyr-291 is subject to Phosphotyrosine. The Nuclear localization signal (NLS) signature appears at 299-306 (MSDYGTAR). At Ser-300 the chain carries Phosphoserine. The residue at position 304 (Thr-304) is a Phosphothreonine. A phosphoserine mark is found at Ser-320, Ser-346, Ser-349, and Ser-352. 4 ARM repeats span residues 358–395 (PPPP…HLCY), 398–437 (DKVK…NISF), 441–475 (QDNK…ITGT), and 476–516 (LWNL…NEDC). Residue Lys-421 forms a Glycyl lysine isopeptide (Lys-Gly) (interchain with G-Cter in SUMO2) linkage. A Glycyl lysine isopeptide (Lys-Gly) (interchain with G-Cter in SUMO2) cross-link involves residue Lys-517. A Nuclear localization signal (NLS) motif is present at residues 521–528 (IEWESVLT). ARM repeat units follow at residues 534–573 (LRNV…DSDS), 583–624 (LRNL…AKKG), 653–693 (ARGY…NLCA), 700–739 (RYIR…NLAV), 740–780 (DARN…SILN), and 781–826 (TINE…ALVL). A phosphothreonine mark is found at Ile-566, Asp-572, Ser-587, and Glu-593. The short motif at 568–575 (QKDSDSKL) is the Nuclear localization signal (NLS) element. At Ser-617 the chain carries Phosphoserine. Positions 622–629 (KKGKDEWF) match the Nuclear localization signal (NLS) motif. Ser-713 is modified (phosphoserine). 3 positions are modified to phosphothreonine: Glu-788, Lys-794, and Asn-809. Ser-811 carries the phosphoserine modification. 3 positions are modified to phosphothreonine: Ser-815, Leu-835, and Lys-841. At Ser-847 the chain carries Phosphoserine. The tract at residues 855–944 (NASRSQSSHS…LMQDEGQESL (90 aa)) is disordered. Residue Ala-856 is modified to Phosphothreonine. Phosphoserine occurs at positions 857, 859, and 861. Ser-862 carries the phosphothreonine modification. Ser-864 is subject to Phosphoserine. Tyr-865 is modified (phosphotyrosine). Ser-868 is subject to Phosphoserine. Residue Thr-869 is modified to Phosphothreonine. Residues 875–888 (RNQKSDKKPDREEI) are compositionally biased toward basic and acidic residues. Residue Ser-879 is modified to Phosphoserine. Lys-882 is covalently cross-linked (Glycyl lysine isopeptide (Lys-Gly) (interchain with G-Cter in SUMO2)). Phosphothreonine occurs at positions 889 and 895. A compositionally biased stretch (polar residues) spans 889–908 (QMSNMGSNTKSLDNNYSTPN). The residue at position 899 (Ser-899) is a Phosphoserine. Tyr-904 carries the post-translational modification Phosphotyrosine. Thr-906, Arg-910, and Thr-916 each carry phosphothreonine. The span at 909-922 (ERGDHNRTLDRSGD) shows a compositional bias: basic and acidic residues. Phosphoserine occurs at positions 920 and 943.

Belongs to the beta-catenin family. In terms of assembly, belongs to a multiprotein cell-cell adhesion complex that also contains E-cadherin/CDH1, alpha-catenin/CTNNA1, beta-catenin/CTNNB1, and gamma-catenin/JUP. Component of a cadherin:catenin adhesion complex composed of at least of CDH26, beta-catenin/CTNNB1, alpha-catenin/CTNNA1 and p120 catenin/CTNND1. Binds to the C-terminal fragment of PSEN1 and mutually competes for CDH1. Interacts with ZBTB33. Interacts with GLIS2. Interacts with FER. Interacts with NANOS1 (via N-terminal region). Interacts (via N-terminus) with GNA12; the interaction regulates CDH1-mediated cell-cell adhesion. Interacts with GNA13. Interacts with CCDC85B. Interacts with PLPP3; negatively regulates the PLPP3-mediated stabilization of CTNNB1. Interacts with DSG3; the interaction facilitates DSG3 localization and retention at cell-cell junctions. Interacts with CTNND1/p120-catenin; the interaction controls CADH5 endocytosis. Post-translationally, phosphorylated by FER and other protein-tyrosine kinases. Phosphorylated at Ser-288 by PAK5. Dephosphorylated by PTPRJ. In terms of tissue distribution, expressed in vascular endothelium. Melanocytes and melanoma cells primarily express the long isoform 1A, whereas keratinocytes express shorter isoforms, especially 3A. The shortest isoform 4A, is detected in normal keratinocytes and melanocytes, and generally lost from cells derived from squamous cell carcinomas or melanomas. The C-terminal alternatively spliced exon B is present in the p120ctn transcripts in the colon, intestine and prostate, but lost in several tumor tissues derived from these organs.

It localises to the cell junction. It is found in the adherens junction. Its subcellular location is the cytoplasm. The protein resides in the nucleus. The protein localises to the cell membrane. Key regulator of cell-cell adhesion that associates with and regulates the cell adhesion properties of both C-, E- and N-cadherins, being critical for their surface stability. Promotes localization and retention of DSG3 at cell-cell junctions, via its interaction with DSG3. Beside cell-cell adhesion, regulates gene transcription through several transcription factors including ZBTB33/Kaiso2 and GLIS2, and the activity of Rho family GTPases and downstream cytoskeletal dynamics. Implicated both in cell transformation by SRC and in ligand-induced receptor signaling through the EGF, PDGF, CSF-1 and ERBB2 receptors. This Homo sapiens (Human) protein is Catenin delta-1.